Reading from the N-terminus, the 217-residue chain is 3-demethoxyubiquinol 3-hydroxylase (217 aa).

Fe cation-binding residues include Glu66, Glu96, His99, Glu148, Glu180, and His183.

This sequence belongs to the COQ7 family. It depends on Fe cation as a cofactor.

The protein resides in the cell membrane. The enzyme catalyses a 5-methoxy-2-methyl-3-(all-trans-polyprenyl)benzene-1,4-diol + AH2 + O2 = a 3-demethylubiquinol + A + H2O. The protein operates within cofactor biosynthesis; ubiquinone biosynthesis. Functionally, catalyzes the hydroxylation of 2-nonaprenyl-3-methyl-6-methoxy-1,4-benzoquinol during ubiquinone biosynthesis. The chain is 3-demethoxyubiquinol 3-hydroxylase from Xanthomonas euvesicatoria pv. vesicatoria (strain 85-10) (Xanthomonas campestris pv. vesicatoria).